Consider the following 429-residue polypeptide: Serine hydroxymethyltransferase (429 aa).

(6S)-5,6,7,8-tetrahydrofolate contacts are provided by residues Leu-130 and 134–136 (GHL). Lys-239 carries the N6-(pyridoxal phosphate)lysine modification.

It belongs to the SHMT family. In terms of assembly, homodimer. Pyridoxal 5'-phosphate is required as a cofactor.

The protein localises to the cytoplasm. The enzyme catalyses (6R)-5,10-methylene-5,6,7,8-tetrahydrofolate + glycine + H2O = (6S)-5,6,7,8-tetrahydrofolate + L-serine. It functions in the pathway one-carbon metabolism; tetrahydrofolate interconversion. The protein operates within amino-acid biosynthesis; glycine biosynthesis; glycine from L-serine: step 1/1. Its function is as follows. Catalyzes the reversible interconversion of serine and glycine with tetrahydrofolate (THF) serving as the one-carbon carrier. This reaction serves as the major source of one-carbon groups required for the biosynthesis of purines, thymidylate, methionine, and other important biomolecules. Also exhibits THF-independent aldolase activity toward beta-hydroxyamino acids, producing glycine and aldehydes, via a retro-aldol mechanism. The sequence is that of Serine hydroxymethyltransferase from Phenylobacterium zucineum (strain HLK1).